Reading from the N-terminus, the 556-residue chain is Glucomannan 4-beta-mannosyltransferase 7 (556 aa).

The chain crosses the membrane as a helical span at residues 58 to 78; the sequence is VVVPVFKFLVLLCLVMSVMFF. Residue aspartate 158 is part of the active site. Substrate is bound by residues aspartate 217 and aspartate 219. Aspartate 311 is an active-site residue. 4 helical membrane passes run 390 to 410, 426 to 448, 502 to 522, and 526 to 546; these read IVAH…TVLF, LITL…WVLF, LLEL…IVYG, and LYVY…GFVG.

Belongs to the glycosyltransferase 2 family. Plant cellulose synthase-like A subfamily. As to expression, ubiquitous.

It is found in the golgi apparatus membrane. The catalysed reaction is GDP-mannose + (glucomannan)n = GDP + (glucomannan)n+1.. Functionally, probable mannan synthase which consists of a 4-beta-mannosyltransferase activity on mannan using GDP-mannose. The beta-1,4-mannan product is the backbone for galactomannan synthesis by galactomannan galactosyltransferase. Galactomannan is a noncellulosic polysaccharides of plant cell wall. Required for synthesis of a cell wall polysaccharide essential for pollen tube growth, for cell wall structure, or for signaling during plant embryo development. This chain is Glucomannan 4-beta-mannosyltransferase 7, found in Arabidopsis thaliana (Mouse-ear cress).